Reading from the N-terminus, the 342-residue chain is Galactose mutarotase (342 aa).

The residue at position 2 (alanine 2) is an N-acetylalanine. Serine 14 bears the Phosphoserine mark. Beta-D-galactose contacts are provided by residues 81-82 (NR) and histidine 107. Serine 124 carries the phosphoserine modification. Histidine 176 acts as the Proton donor in catalysis. Residues 176 to 178 (HSY), aspartate 243, glutamine 279, and glutamate 307 each bind beta-D-galactose. Catalysis depends on glutamate 307, which acts as the Proton acceptor.

This sequence belongs to the aldose epimerase family. Monomer.

It is found in the cytoplasm. The enzyme catalyses alpha-D-galactose = beta-D-galactose. The catalysed reaction is alpha-D-glucose = beta-D-glucose. It functions in the pathway carbohydrate metabolism; hexose metabolism. It participates in carbohydrate metabolism; galactose metabolism. Functionally, mutarotase that catalyzes the interconversion of beta-D-galactose and alpha-D-galactose during galactose metabolism. Beta-D-galactose is metabolized in the liver into glucose 1-phosphate, the primary metabolic fuel, by the action of four enzymes that constitute the Leloir pathway: GALM, GALK1 (galactokinase), GALT (galactose-1-phosphate uridylyltransferase) and GALE (UDP-galactose-4'-epimerase). Involved in the maintenance of the equilibrium between the beta- and alpha-anomers of galactose, therefore ensuring a sufficient supply of the alpha-anomer for GALK1. Also active on D-glucose although shows a preference for galactose over glucose. This chain is Galactose mutarotase, found in Homo sapiens (Human).